A 559-amino-acid chain; its full sequence is Glucans biosynthesis protein G (559 aa).

The signal sequence occupies residues Met-1–Ala-37.

This sequence belongs to the OpgD/OpgG family.

It is found in the periplasm. It participates in glycan metabolism; osmoregulated periplasmic glucan (OPG) biosynthesis. Functionally, involved in the biosynthesis of osmoregulated periplasmic glucans (OPGs). In Shewanella frigidimarina (strain NCIMB 400), this protein is Glucans biosynthesis protein G.